The chain runs to 205 residues: Fe/S biogenesis protein NfuA (205 aa).

[4Fe-4S] cluster is bound by residues cysteine 162 and cysteine 165.

Belongs to the NfuA family. Homodimer. Requires [4Fe-4S] cluster as cofactor.

Its function is as follows. Involved in iron-sulfur cluster biogenesis. Binds a 4Fe-4S cluster, can transfer this cluster to apoproteins, and thereby intervenes in the maturation of Fe/S proteins. Could also act as a scaffold/chaperone for damaged Fe/S proteins. The chain is Fe/S biogenesis protein NfuA from Blochmanniella floridana.